The chain runs to 39 residues: Basic phospholipase A2 (39 aa).

Tyr-27, Gly-29, and Gly-31 together coordinate Ca(2+).

It belongs to the phospholipase A2 family. Group II subfamily. D49 sub-subfamily. The cofactor is Ca(2+). Expressed by the venom gland.

It localises to the secreted. The enzyme catalyses a 1,2-diacyl-sn-glycero-3-phosphocholine + H2O = a 1-acyl-sn-glycero-3-phosphocholine + a fatty acid + H(+). Its activity is regulated as follows. Is selectively inhibited by the gamma-phospholipase A2 inhibitor (PLI) CgMIP-I (AC P0DQP7) but not by the alpha-PLI CgMIP-II (AC P0DQP8). Snake venom phospholipase A2 (PLA2) that shows high myotoxic activities, induces mild edema, and shows cytolytic, and anti-coagulant activities, as well as intracerebral lethal effect. Does not induce lethality at a dose of 5 ug/g, when intravenously injected into mice. PLA2 catalyzes the calcium-dependent hydrolysis of the 2-acyl groups in 3-sn-phosphoglycerides. The sequence is that of Basic phospholipase A2 from Cerrophidion godmani (Porthidium godmani).